A 632-amino-acid chain; its full sequence is MAU2 chromatid cohesion factor homolog (632 aa).

TPR repeat units follow at residues 453–486 (GGFY…ANAE) and 493–526 (SCSL…ASKI).

The protein belongs to the SCC4/mau-2 family. As to quaternary structure, interacts with Nipped-B to form the cohesin loading complex.

It localises to the nucleus. It is found in the nucleoplasm. Functionally, required for association of the cohesin complex with chromatin during interphase. Plays a role in sister chromatid cohesion and normal progression through prometaphase. The sequence is that of MAU2 chromatid cohesion factor homolog from Drosophila simulans (Fruit fly).